The chain runs to 271 residues: Shikimate dehydrogenase (NADP(+)) (271 aa).

Shikimate-binding positions include 14-16 and Thr61; that span reads SLS. Lys65 acts as the Proton acceptor in catalysis. Residues Asn86 and Asp101 each coordinate shikimate. NADP(+) contacts are provided by residues 125–129 and Ile212; that span reads GAGGA. Position 214 (Tyr214) interacts with shikimate. Gly235 provides a ligand contact to NADP(+).

Belongs to the shikimate dehydrogenase family. Homodimer.

The catalysed reaction is shikimate + NADP(+) = 3-dehydroshikimate + NADPH + H(+). Its pathway is metabolic intermediate biosynthesis; chorismate biosynthesis; chorismate from D-erythrose 4-phosphate and phosphoenolpyruvate: step 4/7. Functionally, involved in the biosynthesis of the chorismate, which leads to the biosynthesis of aromatic amino acids. Catalyzes the reversible NADPH linked reduction of 3-dehydroshikimate (DHSA) to yield shikimate (SA). The chain is Shikimate dehydrogenase (NADP(+)) from Clostridium perfringens (strain ATCC 13124 / DSM 756 / JCM 1290 / NCIMB 6125 / NCTC 8237 / Type A).